The following is a 386-amino-acid chain: ATP synthase gamma chain 2, chloroplastic (386 aa).

Positions 1 to 22 are disordered; the sequence is MTGSISTSWLLSSPSNSNSASS. The N-terminal 60 residues, 1–60, are a transit peptide targeting the chloroplast; that stretch reads MTGSISTSWLLSSPSNSNSASSSESYSFIATLKPVRYYPFQSLTPNRISSRSPLPSIQIR. The active site involves Cys149. A disulfide bridge connects residues Cys260 and Cys266.

This sequence belongs to the ATPase gamma chain family. As to quaternary structure, F-type ATPases have 2 components, CF(1) - the catalytic core - and CF(0) - the membrane proton channel. CF(1) has five subunits: alpha(3), beta(3), gamma(1), delta(1), epsilon(1). CF(0) has four main subunits: a, b, b' and c.

The protein localises to the plastid. The protein resides in the chloroplast thylakoid membrane. Functionally, produces ATP from ADP in the presence of a proton gradient across the membrane. The gamma chain is believed to be important in regulating ATPase activity and the flow of protons through the CF(0) complex. In Arabidopsis thaliana (Mouse-ear cress), this protein is ATP synthase gamma chain 2, chloroplastic (ATPC2).